Reading from the N-terminus, the 246-residue chain is NAD-dependent protein deacetylase (246 aa).

The Deacetylase sirtuin-type domain maps to 1-246; that stretch reads MKKPDIQQLK…VIEEIVNSNS (246 aa). 7 residues coordinate NAD(+): Ala25, Phe36, Arg37, Gln106, Ile108, Asp109, and His124. Phe36 serves as a coordination point for nicotinamide. Ile108 and Asp109 together coordinate nicotinamide. Catalysis depends on His124, which acts as the Proton acceptor. Residues Cys132, Cys135, Cys152, and Cys155 each contribute to the Zn(2+) site. 4 residues coordinate NAD(+): Ser193, Ser194, Asn216, and Asp233.

The protein belongs to the sirtuin family. Class U subfamily. Zn(2+) is required as a cofactor.

It is found in the cytoplasm. It carries out the reaction N(6)-acetyl-L-lysyl-[protein] + NAD(+) + H2O = 2''-O-acetyl-ADP-D-ribose + nicotinamide + L-lysyl-[protein]. Functionally, NAD-dependent protein deacetylase which modulates the activities of several enzymes which are inactive in their acetylated form. The chain is NAD-dependent protein deacetylase from Staphylococcus epidermidis (strain ATCC 35984 / DSM 28319 / BCRC 17069 / CCUG 31568 / BM 3577 / RP62A).